The sequence spans 215 residues: Putative ribosome biogenesis protein slx9-like (215 aa).

Disordered stretches follow at residues 49 to 121 (IIPS…GLGM), 133 to 157 (DSMK…MSLK), and 189 to 215 (LQNQ…LKRK).

Belongs to the SLX9 family.

The protein localises to the nucleus. The protein resides in the nucleolus. Functionally, involved in ribosome biogenesis. The protein is Putative ribosome biogenesis protein slx9-like of Dictyostelium discoideum (Social amoeba).